The chain runs to 188 residues: Large ribosomal subunit protein uL5 (188 aa).

The protein belongs to the universal ribosomal protein uL5 family. Part of the 50S ribosomal subunit; contacts the 5S rRNA and probably tRNA. Forms a bridge to the 30S subunit in the 70S ribosome.

Functionally, this is one of the proteins that bind and probably mediate the attachment of the 5S RNA into the large ribosomal subunit, where it forms part of the central protuberance. In the 70S ribosome it contacts protein S13 of the 30S subunit (bridge B1b), connecting the 2 subunits; this bridge is implicated in subunit movement. May contact the P site tRNA; the 5S rRNA and some of its associated proteins might help stabilize positioning of ribosome-bound tRNAs. The protein is Large ribosomal subunit protein uL5 of Pyrococcus horikoshii (strain ATCC 700860 / DSM 12428 / JCM 9974 / NBRC 100139 / OT-3).